A 501-amino-acid polypeptide reads, in one-letter code: UDP-N-acetylmuramoyl-L-alanyl-D-glutamate--2,6-diaminopimelate ligase (501 aa).

UDP-N-acetyl-alpha-D-muramoyl-L-alanyl-D-glutamate-binding positions include Leu-26, Ser-28, and 43 to 45; that span reads HQC. 123-129 is a binding site for ATP; sequence GTNGKTT. Residues Asn-164, 165–166, Ser-192, Gln-198, and Arg-200 contribute to the UDP-N-acetyl-alpha-D-muramoyl-L-alanyl-D-glutamate site; that span reads TT. Residue Lys-232 is modified to N6-carboxylysine. Meso-2,6-diaminopimelate-binding positions include Arg-398, 422-425, Gly-473, and Glu-477; that span reads DNPR. The short motif at 422–425 is the Meso-diaminopimelate recognition motif element; the sequence is DNPR.

This sequence belongs to the MurCDEF family. MurE subfamily. Mg(2+) is required as a cofactor. In terms of processing, carboxylation is probably crucial for Mg(2+) binding and, consequently, for the gamma-phosphate positioning of ATP.

It is found in the cytoplasm. It carries out the reaction UDP-N-acetyl-alpha-D-muramoyl-L-alanyl-D-glutamate + meso-2,6-diaminopimelate + ATP = UDP-N-acetyl-alpha-D-muramoyl-L-alanyl-gamma-D-glutamyl-meso-2,6-diaminopimelate + ADP + phosphate + H(+). The protein operates within cell wall biogenesis; peptidoglycan biosynthesis. In terms of biological role, catalyzes the addition of meso-diaminopimelic acid to the nucleotide precursor UDP-N-acetylmuramoyl-L-alanyl-D-glutamate (UMAG) in the biosynthesis of bacterial cell-wall peptidoglycan. This chain is UDP-N-acetylmuramoyl-L-alanyl-D-glutamate--2,6-diaminopimelate ligase, found in Haemophilus ducreyi (strain 35000HP / ATCC 700724).